Here is a 731-residue protein sequence, read N- to C-terminus: Penicillin-binding protein 2a (731 aa).

The Cytoplasmic segment spans residues 1–56; that stretch reads MKLDKLFEKFLSLFKKETSELEDSDSTILRRSRSDRKKLAQVGPIRKFWRRYHLTK. Residues 57–77 form a helical; Signal-anchor for type II membrane protein membrane-spanning segment; that stretch reads IILILGLSAGLLVGIYLFAVA. The hydrophobic; associated with cytoplasmic membrane. Required for transglycosylase activity, but not for lipid II binding stretch occupies residues 78–156; that stretch reads KSTNVNDLQN…FLAIVTAGRS (79 aa). The transglycosylase stretch occupies residues 78–300; sequence KSTNVNDLQN…SQLHDKYEGK (223 aa). Residues 78 to 731 lie on the Extracellular side of the membrane; it reads KSTNVNDLQN…IWDSIVNLFR (654 aa). The active-site Proton donor; for transglycosylase activity is the Glu131. Residues 301–731 form a transpeptidase region; the sequence is ISDYRYPSYF…IWDSIVNLFR (431 aa). Catalysis depends on Ser410, which acts as the Acyl-ester intermediate; for transpeptidase activity. Residues 674-694 are disordered; that stretch reads ANTKRQVQTNDNSQTDDNLSD. Over residues 676-690 the composition is skewed to polar residues; sequence TKRQVQTNDNSQTDD.

In the N-terminal section; belongs to the glycosyltransferase 51 family. It in the C-terminal section; belongs to the transpeptidase family. As to quaternary structure, homodimer. May also form higher order oligomers. Self-association may depend on its transmembrane and/or cytoplasmic regions. Interacts with MacP; interaction is required for the function of this protein.

The protein localises to the cell membrane. The protein resides in the secreted. Its subcellular location is the cell wall. The enzyme catalyses Preferential cleavage: (Ac)2-L-Lys-D-Ala-|-D-Ala. Also transpeptidation of peptidyl-alanyl moieties that are N-acyl substituents of D-alanine.. The catalysed reaction is [GlcNAc-(1-&gt;4)-Mur2Ac(oyl-L-Ala-gamma-D-Glu-L-Lys-D-Ala-D-Ala)](n)-di-trans,octa-cis-undecaprenyl diphosphate + beta-D-GlcNAc-(1-&gt;4)-Mur2Ac(oyl-L-Ala-gamma-D-Glu-L-Lys-D-Ala-D-Ala)-di-trans,octa-cis-undecaprenyl diphosphate = [GlcNAc-(1-&gt;4)-Mur2Ac(oyl-L-Ala-gamma-D-Glu-L-Lys-D-Ala-D-Ala)](n+1)-di-trans,octa-cis-undecaprenyl diphosphate + di-trans,octa-cis-undecaprenyl diphosphate + H(+). It functions in the pathway cell wall biogenesis; peptidoglycan biosynthesis. Its function is as follows. Cell wall formation. Synthesis of cross-linked peptidoglycan (PG) from the lipid intermediates. Binds dansylated lipid II and catalyzes the polymerization of glycan chains. Hydrolyzes S2d (N-benzoyl-D-alanylmercaptoacetic acid) molecule, a synthetic thiolester analog of cell wall stem peptide. Active against bocillin, a fluorescent penicillin. No transpeptidase activity with non-fluorescent lysine-containing lipid II as substrate. The polypeptide is Penicillin-binding protein 2a (Streptococcus pneumoniae serotype 2 (strain D39 / NCTC 7466)).